The sequence spans 174 residues: RNA pyrophosphohydrolase (174 aa).

One can recognise a Nudix hydrolase domain in the interval 6-149; the sequence is GYRPNVGIIL…KRDVYLGALK (144 aa). The Nudix box motif lies at 38 to 59; that stretch reads GGIKPGESPETAMYRELYEEVG.

The protein belongs to the Nudix hydrolase family. RppH subfamily. Requires a divalent metal cation as cofactor.

In terms of biological role, accelerates the degradation of transcripts by removing pyrophosphate from the 5'-end of triphosphorylated RNA, leading to a more labile monophosphorylated state that can stimulate subsequent ribonuclease cleavage. This is RNA pyrophosphohydrolase from Neisseria meningitidis serogroup C / serotype 2a (strain ATCC 700532 / DSM 15464 / FAM18).